A 38-amino-acid chain; its full sequence is Glucagon-like peptide (38 aa).

It belongs to the glucagon family.

The protein resides in the secreted. This is Glucagon-like peptide from Hydrolagus colliei (Spotted ratfish).